Reading from the N-terminus, the 383-residue chain is Glycoprotein gp2 (383 aa).

An N-terminal signal peptide occupies residues 1–25 (MGFIYARKLLLCMAVSIYAIGSTTT). A compositionally biased stretch (low complexity) spans 24–75 (TTTETTTSSSSTSGSGQSTSSGTTNSSSSPTTSPPTTSSSPPTSTHTSSPST). A disordered region spans residues 24–136 (TTTETTTSSS…RNNSIEIVPQ (113 aa)). Asn-48 carries an N-linked (GlcNAc...) asparagine; by host glycan. Residues 81–91 (HAGHHRGRAGG) show a composition bias toward basic residues. The N-linked (GlcNAc...) asparagine; by host glycan is linked to Asn-128. The helical transmembrane segment at 354 to 371 (LVAATTLTVTILCLLCCL) threads the bilayer.

It is found in the virion membrane. In terms of biological role, the glycoprotein gp2 from the avirulent strain Kentucky A (KyA) is probably non functional since this strain harbors an in-frame deletion of 1,242 nucleotides in gene 71. The chain is Glycoprotein gp2 (US4) from Equus caballus (Horse).